Consider the following 149-residue polypeptide: Urease accessory protein UreE (149 aa).

This sequence belongs to the UreE family.

It localises to the cytoplasm. In terms of biological role, involved in urease metallocenter assembly. Binds nickel. Probably functions as a nickel donor during metallocenter assembly. The sequence is that of Urease accessory protein UreE from Ureaplasma urealyticum serovar 10 (strain ATCC 33699 / Western).